The primary structure comprises 204 residues: Glycerol-3-phosphate acyltransferase (204 aa).

Transmembrane regions (helical) follow at residues 8 to 28 (ILIF…CYIF), 53 to 73 (VPAA…VVIA), 81 to 101 (FITA…IFFG), 116 to 136 (FGFS…VAII), and 155 to 175 (VIFT…IIIL).

It belongs to the PlsY family. In terms of assembly, probably interacts with PlsX.

Its subcellular location is the cell inner membrane. The catalysed reaction is an acyl phosphate + sn-glycerol 3-phosphate = a 1-acyl-sn-glycero-3-phosphate + phosphate. The protein operates within lipid metabolism; phospholipid metabolism. Its function is as follows. Catalyzes the transfer of an acyl group from acyl-phosphate (acyl-PO(4)) to glycerol-3-phosphate (G3P) to form lysophosphatidic acid (LPA). This enzyme utilizes acyl-phosphate as fatty acyl donor, but not acyl-CoA or acyl-ACP. This is Glycerol-3-phosphate acyltransferase from Francisella tularensis subsp. novicida (strain U112).